Consider the following 193-residue polypeptide: NADH-quinone oxidoreductase subunit B (193 aa).

C49, C50, C115, and C144 together coordinate [4Fe-4S] cluster. Residues F172–E193 are disordered.

This sequence belongs to the complex I 20 kDa subunit family. NDH-1 is composed of 14 different subunits. Subunits NuoB, C, D, E, F, and G constitute the peripheral sector of the complex. [4Fe-4S] cluster serves as cofactor.

It localises to the cell inner membrane. It carries out the reaction a quinone + NADH + 5 H(+)(in) = a quinol + NAD(+) + 4 H(+)(out). Functionally, NDH-1 shuttles electrons from NADH, via FMN and iron-sulfur (Fe-S) centers, to quinones in the respiratory chain. The immediate electron acceptor for the enzyme in this species is believed to be ubiquinone. Couples the redox reaction to proton translocation (for every two electrons transferred, four hydrogen ions are translocated across the cytoplasmic membrane), and thus conserves the redox energy in a proton gradient. This chain is NADH-quinone oxidoreductase subunit B, found in Akkermansia muciniphila (strain ATCC BAA-835 / DSM 22959 / JCM 33894 / BCRC 81048 / CCUG 64013 / CIP 107961 / Muc).